Reading from the N-terminus, the 346-residue chain is S-adenosylmethionine:tRNA ribosyltransferase-isomerase (346 aa).

It belongs to the QueA family. In terms of assembly, monomer.

The protein resides in the cytoplasm. The catalysed reaction is 7-aminomethyl-7-carbaguanosine(34) in tRNA + S-adenosyl-L-methionine = epoxyqueuosine(34) in tRNA + adenine + L-methionine + 2 H(+). It functions in the pathway tRNA modification; tRNA-queuosine biosynthesis. Its function is as follows. Transfers and isomerizes the ribose moiety from AdoMet to the 7-aminomethyl group of 7-deazaguanine (preQ1-tRNA) to give epoxyqueuosine (oQ-tRNA). This Neisseria gonorrhoeae (strain ATCC 700825 / FA 1090) protein is S-adenosylmethionine:tRNA ribosyltransferase-isomerase.